A 435-amino-acid polypeptide reads, in one-letter code: Serine/threonine-protein kinase 40 (435 aa).

The 298-residue stretch at 35–332 folds into the Protein kinase domain; that stretch reads FILGPRLGNS…DVLEALSAII (298 aa). Residues 41–49 and Lys-66 each bind ATP; that span reads LGNSPVPSI. Asp-197 serves as the catalytic Proton acceptor.

It belongs to the protein kinase superfamily. CAMK Ser/Thr protein kinase family.

It is found in the nucleus. Its subcellular location is the cytoplasm. The enzyme catalyses L-seryl-[protein] + ATP = O-phospho-L-seryl-[protein] + ADP + H(+). The catalysed reaction is L-threonyl-[protein] + ATP = O-phospho-L-threonyl-[protein] + ADP + H(+). May be a negative regulator of NF-kappa-B and p53-mediated gene transcription. The protein is Serine/threonine-protein kinase 40 (Stk40) of Rattus norvegicus (Rat).